A 362-amino-acid polypeptide reads, in one-letter code: Chorismate synthase (362 aa).

Arg-46 lines the NADP(+) pocket. FMN contacts are provided by residues 122-124 (RSS), 238-239 (NA), Gly-278, 293-297 (KPTPS), and Arg-319.

It belongs to the chorismate synthase family. Homotetramer. It depends on FMNH2 as a cofactor.

It catalyses the reaction 5-O-(1-carboxyvinyl)-3-phosphoshikimate = chorismate + phosphate. The protein operates within metabolic intermediate biosynthesis; chorismate biosynthesis; chorismate from D-erythrose 4-phosphate and phosphoenolpyruvate: step 7/7. In terms of biological role, catalyzes the anti-1,4-elimination of the C-3 phosphate and the C-6 proR hydrogen from 5-enolpyruvylshikimate-3-phosphate (EPSP) to yield chorismate, which is the branch point compound that serves as the starting substrate for the three terminal pathways of aromatic amino acid biosynthesis. This reaction introduces a second double bond into the aromatic ring system. This Campylobacter jejuni subsp. jejuni serotype O:2 (strain ATCC 700819 / NCTC 11168) protein is Chorismate synthase.